The chain runs to 216 residues: MTGSMIVNNLAGLMMLTSLFVISVKSYRLSCGFYACQSLVLVSIFATLSCLFAAEQLLIWSASAFITKVLLVPLIMTYAARNIPQNIPEKALFGPAMMALLAALIVLLCAFVVQPVKLPMATGLKPALAVALGHFLLGLLCIVSQRNILRQIFGYCLMENGSHLVLALLAWRAPELVEIGIATDAIFAVIVMVLLARKIWRTHGTLDVNNLTALKG.

Over 1–3 the chain is Periplasmic; sequence MTG. Residues 4–24 traverse the membrane as a helical segment; sequence SMIVNNLAGLMMLTSLFVISV. Topologically, residues 25–38 are cytoplasmic; it reads KSYRLSCGFYACQS. 2 consecutive transmembrane segments (helical) span residues 39 to 59 and 60 to 80; these read LVLV…QLLI and WSAS…TYAA. Residues 81 to 92 are Cytoplasmic-facing; the sequence is RNIPQNIPEKAL. Residues 93-113 form a helical membrane-spanning segment; it reads FGPAMMALLAALIVLLCAFVV. Topologically, residues 114–122 are periplasmic; that stretch reads QPVKLPMAT. Residues 123 to 143 form a helical membrane-spanning segment; that stretch reads GLKPALAVALGHFLLGLLCIV. Residues 144 to 150 lie on the Cytoplasmic side of the membrane; it reads SQRNILR. The helical transmembrane segment at 151–171 threads the bilayer; sequence QIFGYCLMENGSHLVLALLAW. Residues 172 to 175 lie on the Periplasmic side of the membrane; that stretch reads RAPE. A helical membrane pass occupies residues 176–196; the sequence is LVEIGIATDAIFAVIVMVLLA. Residues 197–216 lie on the Cytoplasmic side of the membrane; sequence RKIWRTHGTLDVNNLTALKG.

The protein localises to the cell inner membrane. The sequence is that of Hydrogenase-4 component E (hyfE) from Escherichia coli O157:H7.